A 342-amino-acid polypeptide reads, in one-letter code: Alanine racemase (342 aa).

The Proton acceptor; specific for D-alanine role is filled by Lys-33. Lys-33 carries the post-translational modification N6-(pyridoxal phosphate)lysine. Arg-128 is a binding site for substrate. Tyr-240 acts as the Proton acceptor; specific for L-alanine in catalysis. Met-288 is a substrate binding site.

This sequence belongs to the alanine racemase family. Requires pyridoxal 5'-phosphate as cofactor.

It carries out the reaction L-alanine = D-alanine. It functions in the pathway amino-acid biosynthesis; D-alanine biosynthesis; D-alanine from L-alanine: step 1/1. In terms of biological role, catalyzes the interconversion of L-alanine and D-alanine. May also act on other amino acids. The sequence is that of Alanine racemase (alr) from Jannaschia sp. (strain CCS1).